The primary structure comprises 374 residues: Putative glutamate--cysteine ligase 2 (374 aa).

This sequence belongs to the glutamate--cysteine ligase type 2 family. YbdK subfamily.

It catalyses the reaction L-cysteine + L-glutamate + ATP = gamma-L-glutamyl-L-cysteine + ADP + phosphate + H(+). Its function is as follows. ATP-dependent carboxylate-amine ligase which exhibits weak glutamate--cysteine ligase activity. This chain is Putative glutamate--cysteine ligase 2, found in Verminephrobacter eiseniae (strain EF01-2).